The primary structure comprises 448 residues: Ribosomal protein uS12 methylthiotransferase RimO (448 aa).

An MTTase N-terminal domain is found at 7 to 119; that stretch reads QSLHLISLGC…IDSMIAQRRS (113 aa). Cys16, Cys50, Cys82, Cys151, Cys155, and Cys158 together coordinate [4Fe-4S] cluster. In terms of domain architecture, Radical SAM core spans 137 to 366; it reads IGSSFHAYIK…NKIIQSQYKA (230 aa).

Belongs to the methylthiotransferase family. RimO subfamily. Requires [4Fe-4S] cluster as cofactor.

It is found in the cytoplasm. It carries out the reaction L-aspartate(89)-[ribosomal protein uS12]-hydrogen + (sulfur carrier)-SH + AH2 + 2 S-adenosyl-L-methionine = 3-methylsulfanyl-L-aspartate(89)-[ribosomal protein uS12]-hydrogen + (sulfur carrier)-H + 5'-deoxyadenosine + L-methionine + A + S-adenosyl-L-homocysteine + 2 H(+). Its function is as follows. Catalyzes the methylthiolation of an aspartic acid residue of ribosomal protein uS12. The sequence is that of Ribosomal protein uS12 methylthiotransferase RimO from Helicobacter hepaticus (strain ATCC 51449 / 3B1).